A 134-amino-acid chain; its full sequence is Methylglyoxal synthase (134 aa).

The MGS-like domain maps to 1-134 (MNIALIAHDN…DWRERVKERG (134 aa)). Substrate is bound by residues histidine 8, lysine 12, 34-37 (TGTT), and 54-55 (SG). Residue aspartate 60 is the Proton donor/acceptor of the active site. Histidine 87 contacts substrate.

Belongs to the methylglyoxal synthase family.

It catalyses the reaction dihydroxyacetone phosphate = methylglyoxal + phosphate. Its function is as follows. Catalyzes the formation of methylglyoxal from dihydroxyacetone phosphate. In Alkaliphilus metalliredigens (strain QYMF), this protein is Methylglyoxal synthase.